We begin with the raw amino-acid sequence, 373 residues long: Peroxisomal biogenesis factor 3 (373 aa).

The Cytoplasmic segment spans residues 1–15 (MFRSTWNFLKRHKKK). Residues 1-45 (MFRSTWNFLKRHKKKCIFLGTVLGGVYILGKYGQKKIREIQEREA) are targeting to peroxisomes. Residues 16–36 (CIFLGTVLGGVYILGKYGQKK) traverse the membrane as a helical segment. Residues 37–116 (IREIQEREAA…LKIISFTRSI (80 aa)) are Peroxisomal-facing. Residues 117 to 140 (VAVYSTCMLVVLLRVQLNIIGGYI) traverse the membrane as a helical segment. The tract at residues 120 to 136 (YSTCMLVVLLRVQLNII) is interaction with PEX19. The Cytoplasmic portion of the chain corresponds to 141 to 373 (YLDNAAVGKN…AFSTPQQLEK (233 aa)).

This sequence belongs to the peroxin-3 family. As to quaternary structure, interacts with PEX19.

It localises to the peroxisome membrane. Its function is as follows. Involved in peroxisome biosynthesis and integrity. Assembles membrane vesicles before the matrix proteins are translocated. As a docking factor for PEX19, is necessary for the import of peroxisomal membrane proteins in the peroxisomes. In Bos taurus (Bovine), this protein is Peroxisomal biogenesis factor 3 (PEX3).